Here is a 174-residue protein sequence, read N- to C-terminus: Ribosome maturation factor RimM (174 aa).

Positions 97–169 constitute a PRC barrel domain; sequence GNKFYFHEVI…KVVMDLPEGL (73 aa).

It belongs to the RimM family. As to quaternary structure, binds ribosomal protein uS19.

Its subcellular location is the cytoplasm. In terms of biological role, an accessory protein needed during the final step in the assembly of 30S ribosomal subunit, possibly for assembly of the head region. Essential for efficient processing of 16S rRNA. May be needed both before and after RbfA during the maturation of 16S rRNA. It has affinity for free ribosomal 30S subunits but not for 70S ribosomes. This is Ribosome maturation factor RimM from Flavobacterium psychrophilum (strain ATCC 49511 / DSM 21280 / CIP 103535 / JIP02/86).